The primary structure comprises 302 residues: tRNA dimethylallyltransferase (302 aa).

Position 9 to 16 (9 to 16) interacts with ATP; the sequence is GPTGSGKT. A substrate-binding site is contributed by 11–16; it reads TGSGKT.

This sequence belongs to the IPP transferase family. As to quaternary structure, monomer. The cofactor is Mg(2+).

It carries out the reaction adenosine(37) in tRNA + dimethylallyl diphosphate = N(6)-dimethylallyladenosine(37) in tRNA + diphosphate. Its function is as follows. Catalyzes the transfer of a dimethylallyl group onto the adenine at position 37 in tRNAs that read codons beginning with uridine, leading to the formation of N6-(dimethylallyl)adenosine (i(6)A). This Thermus thermophilus (strain ATCC BAA-163 / DSM 7039 / HB27) protein is tRNA dimethylallyltransferase.